A 431-amino-acid chain; its full sequence is Protein translocase subunit SecY 1 (431 aa).

10 helical membrane passes run 18–38 (IYFT…TVPG), 67–87 (YSIF…IQLL), 115–135 (YLTL…FNAL), 150–170 (VEIA…GDEI), 178–198 (GVSV…LYQI), 215–235 (ILFF…VTWV), 268–288 (VIPV…LMAF), 312–332 (GVII…FVQV), 365–385 (LIKL…LPQL), and 392–412 (LPSS…VVLE).

This sequence belongs to the SecY/SEC61-alpha family. Component of the Sec protein translocase complex. Heterotrimer consisting of SecY, SecE and SecG subunits. The heterotrimers can form oligomers, although 1 heterotrimer is thought to be able to translocate proteins. Interacts with the ribosome. Interacts with SecDF, and other proteins may be involved. Interacts with SecA.

The protein localises to the cell membrane. The central subunit of the protein translocation channel SecYEG. Consists of two halves formed by TMs 1-5 and 6-10. These two domains form a lateral gate at the front which open onto the bilayer between TMs 2 and 7, and are clamped together by SecE at the back. The channel is closed by both a pore ring composed of hydrophobic SecY resides and a short helix (helix 2A) on the extracellular side of the membrane which forms a plug. The plug probably moves laterally to allow the channel to open. The ring and the pore may move independently. In Lactobacillus kefiranofaciens subsp. kefiranofaciens, this protein is Protein translocase subunit SecY 1.